Here is a 395-residue protein sequence, read N- to C-terminus: S-adenosylmethionine synthase (395 aa).

Position 14 (H14) interacts with ATP. D16 serves as a coordination point for Mg(2+). E42 contacts K(+). 2 residues coordinate L-methionine: E55 and Q98. Residues 98 to 108 (QSPDIALGVDK) are flexible loop. ATP contacts are provided by residues 175-177 (DGK), 242-243 (RF), D251, 257-258 (RK), A274, and K278. D251 is an L-methionine binding site. K282 contacts L-methionine.

The protein belongs to the AdoMet synthase family. As to quaternary structure, homotetramer; dimer of dimers. The cofactor is Mg(2+). It depends on K(+) as a cofactor.

The protein localises to the cytoplasm. The catalysed reaction is L-methionine + ATP + H2O = S-adenosyl-L-methionine + phosphate + diphosphate. It functions in the pathway amino-acid biosynthesis; S-adenosyl-L-methionine biosynthesis; S-adenosyl-L-methionine from L-methionine: step 1/1. In terms of biological role, catalyzes the formation of S-adenosylmethionine (AdoMet) from methionine and ATP. The overall synthetic reaction is composed of two sequential steps, AdoMet formation and the subsequent tripolyphosphate hydrolysis which occurs prior to release of AdoMet from the enzyme. This Thermosipho africanus (strain TCF52B) protein is S-adenosylmethionine synthase.